The chain runs to 380 residues: Pectinesterase QRT1 (380 aa).

Positions 1–26 (MKVEAFIPAVLLLCFGVMLCLKSSCA) are cleaved as a signal peptide. 2 N-linked (GlcNAc...) asparagine glycosylation sites follow: N74 and N137. Substrate is bound by residues T164 and Q198. D221 (proton donor) is an active-site residue. N-linked (GlcNAc...) asparagine glycosylation occurs at N227. A disulfide bridge links C235 with C255. D242 functions as the Nucleophile in the catalytic mechanism. Residues R298 and W300 each coordinate substrate. N302 is a glycosylation site (N-linked (GlcNAc...) asparagine).

The protein belongs to the pectinesterase family. As to expression, expressed in flower buds, siliques, developing guard cells, floral nectares, at the stigmatic surface, in the hypocotyl-root transition zone and the area of lateral root emergence. Not expressed in mature leaves.

The protein localises to the secreted. It localises to the cell wall. The catalysed reaction is [(1-&gt;4)-alpha-D-galacturonosyl methyl ester](n) + n H2O = [(1-&gt;4)-alpha-D-galacturonosyl](n) + n methanol + n H(+). It functions in the pathway glycan metabolism; pectin degradation; 2-dehydro-3-deoxy-D-gluconate from pectin: step 1/5. Its function is as follows. Pectinesterase required for cell type-specific pectin degradation to separate microspores. This is Pectinesterase QRT1 from Arabidopsis thaliana (Mouse-ear cress).